Here is a 252-residue protein sequence, read N- to C-terminus: Ribosomal RNA small subunit methyltransferase J (252 aa).

Residues 101–102, 117–118, 153–154, and Asp171 each bind S-adenosyl-L-methionine; these read RD, ER, and SS.

The protein belongs to the methyltransferase superfamily. RsmJ family.

It localises to the cytoplasm. It carries out the reaction guanosine(1516) in 16S rRNA + S-adenosyl-L-methionine = N(2)-methylguanosine(1516) in 16S rRNA + S-adenosyl-L-homocysteine + H(+). In terms of biological role, specifically methylates the guanosine in position 1516 of 16S rRNA. This chain is Ribosomal RNA small subunit methyltransferase J, found in Salmonella dublin (strain CT_02021853).